The sequence spans 219 residues: uncharacterized protein (219 aa).

The disordered stretch occupies residues 70-102 (VHIGDNHPEPKNESKTQPKIESKKEPTLKQEEQ). Residues 73 to 101 (GDNHPEPKNESKTQPKIESKKEPTLKQEE) are compositionally biased toward basic and acidic residues. Positions 96–120 (TLKQEEQTIQAEEEAQKIAKEETRE) form a coiled coil. Transmembrane regions (helical) follow at residues 126-146 (GGEIIIDIMLGILLGIAVNML), 153-173 (IFGLKGTAKFPIQLVLIVIVL), and 192-212 (TYGVIFIPIFITAQRNFAIFF).

Its subcellular location is the membrane. This is an uncharacterized protein from Acanthamoeba polyphaga mimivirus (APMV).